A 303-amino-acid chain; its full sequence is Polyisoprenyl-teichoic acid--peptidoglycan teichoic acid transferase TagU (303 aa).

The Cytoplasmic segment spans residues 1-6 (MSKGKK). A helical; Signal-anchor for type II membrane protein membrane pass occupies residues 7–27 (IFAIIFGIILVLFLAVVGMGA). The Extracellular portion of the chain corresponds to 28–303 (KLYWDVSKSM…QELKNQLNTK (276 aa)).

It belongs to the LytR/CpsA/Psr (LCP) family.

Its subcellular location is the cell membrane. Its pathway is cell wall biogenesis. Functionally, may catalyze the final step in cell wall teichoic acid biosynthesis, the transfer of the anionic cell wall polymers (APs) from their lipid-linked precursor to the cell wall peptidoglycan (PG). This Enterococcus faecalis (strain ATCC 700802 / V583) protein is Polyisoprenyl-teichoic acid--peptidoglycan teichoic acid transferase TagU.